Reading from the N-terminus, the 456-residue chain is RuvB-like 1 (456 aa).

An ATP-binding site is contributed by 70–77 (GPPGTGKT).

It belongs to the RuvB family. Forms homohexameric rings. Can form a dodecamer with ruvbl2 made of two stacked hexameric rings. Is a component of the RNA polymerase II holoenzyme complex. Component of the chromatin-remodeling Ino80 complex. Component of some MLL1/MLL complex.

Its subcellular location is the nucleus. It is found in the dynein axonemal particle. It carries out the reaction ATP + H2O = ADP + phosphate + H(+). In terms of biological role, has single-stranded DNA-stimulated ATPase and ATP-dependent DNA helicase (3' to 5') activity suggesting a role in nuclear processes such as recombination and transcription. Proposed core component of the chromatin remodeling INO80 complex which exhibits DNA- and nucleosome-activated ATPase activity and catalyzes ATP-dependent nucleosome sliding. The polypeptide is RuvB-like 1 (ruvbl1) (Xenopus laevis (African clawed frog)).